The following is a 4128-amino-acid chain: DNA-dependent protein kinase catalytic subunit (4128 aa).

The residue at position 117 (Lys-117) is an N6-acetyllysine. The stretch at 288–323 is one HEAT 1 repeat; it reads DNYVSLFEVLLKWCAHTNVELKKAALSALESFLKQV. A phosphoserine mark is found at Ser-511 and Ser-687. Residue Lys-828 is modified to N6-acetyllysine. 2 positions are modified to phosphoserine: Ser-841 and Ser-893. One copy of the HEAT 2 repeat lies at 1004–1040; the sequence is QDTVALLEAILDGIVDPVDSTLRDFCGRCIREFLKWS. Ser-1065 carries the post-translational modification Phosphoserine. Lys-1209 carries the post-translational modification N6-acetyllysine. The interval 1503–1538 is interaction with C1D; it reads LDLSCKQLASGLLELAFAFGGLCERLVSLLLNPAVL. A leucine-zipper region spans residues 1503–1538; sequence LDLSCKQLASGLLELAFAFGGLCERLVSLLLNPAVL. The TPR 1 repeat unit spans residues 1723 to 1756; that stretch reads PMQSREFPPGTPRFNNYVDCMKKFLDALELSQSP. N6-acetyllysine is present on Lys-1970. A disordered region spans residues 2050–2073; it reads QSYSYSSQDPRPATGRFRRREQRD. Position 2056 is a phosphoserine; by autocatalysis (Ser-2056). Lys-2259 is modified (N6-acetyllysine). Residues 2436-3212 form a KIP-binding region; the sequence is LDIIYKMMPK…DNSMNVDQDG (777 aa). Position 2535 is a phosphothreonine (Thr-2535). A Phosphothreonine; by autocatalysis modification is found at Thr-2609. The residue at position 2612 (Ser-2612) is a Phosphoserine; by autocatalysis. A phosphothreonine; by autocatalysis mark is found at Thr-2638 and Thr-2647. Residues 2737–2765 form a may split the end of the DNA molecule, with the two strands separating around the region region; sequence EKLSLMYARKGVAEQKREKEIKSELKMKQ. Residue Ser-2789 is modified to Phosphoserine. One can recognise an FAT domain in the interval 2906–3539; it reads PAKRVRGKAR…VYPFIISSES (634 aa). TPR repeat units follow at residues 2920–2948 and 2949–2982; these read VLRW…SEIG and TKQI…QDWV. Residues 3200-3222 form a disordered region; the sequence is LPEDNSMNVDQDGDPSDRMEVQE. Ser-3205 carries the phosphoserine modification. N6-acetyllysine is present on residues Lys-3241, Lys-3260, Lys-3621, Lys-3638, and Lys-3642. Residues 3722–4053 enclose the PI3K/PI4K catalytic domain; the sequence is FDERVTVMAS…ICYAKRKLAG (332 aa). Residues 3728–3734 form a G-loop region; the sequence is VMASLRR. Phosphoserine is present on residues Ser-3731 and Ser-3821. Residues 3919 to 3927 form a catalytic loop region; it reads GIGDRHLNN. The activation loop stretch occupies residues 3939–3964; that stretch reads GIDFGHAFGSATQFLPVPELMPFRLT. Position 4026 is a phosphoserine (Ser-4026). The FATC domain occupies 4096–4128; it reads SGLSEETQVKCLMDQATDPNILGRTWEGWEPWM.

It belongs to the PI3/PI4-kinase family. DNA-PK is a heterotrimer of PRKDC and the Ku dimer (composed of XRCC6/Ku70 and XRCC5/Ku86). Formation of this complex may be promoted by interaction with ILF3. Component of the core long-range non-homologous end joining (NHEJ) complex (also named DNA-PK complex) composed of PRKDC, LIG4, XRCC4, XRCC6/Ku70, XRCC5/Ku86 and NHEJ1/XLF. Additional component of the NHEJ complex includes PAXX. Following autophosphorylation, PRKDC dissociates from DNA. Interacts with DNA-PKcs-interacting protein (KIP) with the region upstream the kinase domain. PRKDC alone also interacts with and phosphorylates DCLRE1C, thereby activating the latent endonuclease activity of this protein. Interacts with C1D. Interacts with TTI1 and TELO2. Interacts with CIB1. Interacts with SETX. Interacts with NR4A3; the DNA-dependent protein kinase complex DNA-PK phosphorylates and activates NR4A3 and prevents NR4A3 ubiquitination and degradation. Interacts with BRAT1. Part of the HDP-RNP complex composed of at least HEXIM1, PRKDC, XRCC5, XRCC6, paraspeckle proteins (SFPQ, NONO, PSPC1, RBM14, and MATR3) and NEAT1 RNA. Interacts with KAT5. In terms of processing, autophosphorylated at two clusters, the T2609 cluster and the S2056 cluster. Autophosphorylated on Ser-2056, Thr-2609, Thr-2638 and Thr-2647. Ser-2056 and Thr-2609 are DNA damage-inducible phosphorylation sites (inducible with ionizing radiation, IR) dephosphorylated by PPP5C. Autophosphorylation induces a conformational change that leads to remodeling of the DNA-PK complex, requisite for efficient end processing and DNA repair. Autophosphorylation in trans within DNA-PK complexes loaded on DNA ends leads to the dissociation of PRKDC from DNA and the transition into the short-range NHEJ complex. Autophosphorylation of the T2609 cluster is required for hematopoietic development and protein synthesis in erythrocytes precursors. S-nitrosylated by GAPDH. Post-translationally, polyubiquitinated by RNF144A, leading to proteasomal degradation.

The protein resides in the nucleus. The protein localises to the nucleolus. Its subcellular location is the cytoplasm. It is found in the cytosol. It carries out the reaction L-seryl-[protein] + ATP = O-phospho-L-seryl-[protein] + ADP + H(+). The enzyme catalyses L-threonyl-[protein] + ATP = O-phospho-L-threonyl-[protein] + ADP + H(+). With respect to regulation, activity seems to be attenuated by autophosphorylation. Binding to the SL1 region of U3 small nucleolar RNA promotes auto-phosphorylation activity. Inhibited by wortmannin. Functionally, serine/threonine-protein kinase that acts as a molecular sensor for DNA damage. Involved in DNA non-homologous end joining (NHEJ) required for double-strand break (DSB) repair and V(D)J recombination. Must be bound to DNA to express its catalytic properties. Promotes processing of hairpin DNA structures in V(D)J recombination by activation of the hairpin endonuclease artemis (DCLRE1C). Recruited by XRCC5 and XRCC6 to DNA ends and is required to (1) protect and align broken ends of DNA, thereby preventing their degradation, (2) and sequester the DSB for repair by NHEJ. Acts as a scaffold protein to aid the localization of DNA repair proteins to the site of damage. The assembly of the DNA-PK complex at DNA ends is also required for the NHEJ ligation step. Found at the ends of chromosomes, suggesting a further role in the maintenance of telomeric stability and the prevention of chromosomal end fusion. Also involved in modulation of transcription. As part of the DNA-PK complex, involved in the early steps of ribosome assembly by promoting the processing of precursor rRNA into mature 18S rRNA in the small-subunit processome. Binding to U3 small nucleolar RNA, recruits PRKDC and XRCC5/Ku86 to the small-subunit processome. Recognizes the substrate consensus sequence [ST]-Q. Phosphorylates 'Ser-139' of histone variant H2AX, thereby regulating DNA damage response mechanism. Phosphorylates ASF1A, DCLRE1C, c-Abl/ABL1, histone H1, HSPCA, c-jun/JUN, p53/TP53, PARP1, POU2F1, DHX9, FH, SRF, NHEJ1/XLF, XRCC1, XRCC4, XRCC5, XRCC6, WRN, MYC and RFA2. Can phosphorylate C1D not only in the presence of linear DNA but also in the presence of supercoiled DNA. Ability to phosphorylate p53/TP53 in the presence of supercoiled DNA is dependent on C1D. Acts as a regulator of the phosphatidylinositol 3-kinase/protein kinase B signal transduction by mediating phosphorylation of 'Ser-473' of protein kinase B (PKB/AKT1, PKB/AKT2, PKB/AKT3), promoting their activation. Contributes to the determination of the circadian period length by antagonizing phosphorylation of CRY1 'Ser-588' and increasing CRY1 protein stability, most likely through an indirect mechanism. Plays a role in the regulation of DNA virus-mediated innate immune response by assembling into the HDP-RNP complex, a complex that serves as a platform for IRF3 phosphorylation and subsequent innate immune response activation through the cGAS-STING pathway. Also regulates the cGAS-STING pathway by catalyzing phosphorylation of CGAS, thereby impairing CGAS oligomerization and activation. Also regulates the cGAS-STING pathway by mediating phosphorylation of PARP1. The chain is DNA-dependent protein kinase catalytic subunit (PRKDC) from Homo sapiens (Human).